A 330-amino-acid chain; its full sequence is Exostosin-like 2 (330 aa).

At 1–21 (MMRGCHICKLPGRVMGIRVLR) the chain is on the cytoplasmic side. Residues 22 to 42 (FSLVVILVLLLVAGALTNLLP) traverse the membrane as a helical; Signal-anchor for type II membrane protein segment. Residues 43-330 (NIKEDKMLTL…FPYANHKSKM (288 aa)) lie on the Lumenal side of the membrane. Residue Gln72 participates in UDP-N-acetyl-alpha-D-galactosamine binding. Gln72 is a UDP-N-acetyl-alpha-D-glucosamine binding site. Asn75 carries N-linked (GlcNAc...) asparagine glycosylation. 8 residues coordinate UDP-N-acetyl-alpha-D-galactosamine: Arg76, Asn101, Asn130, Arg135, Asp151, Asp152, Asp153, and Asp245. Positions 76, 101, 130, 135, 151, 152, 153, 245, 246, and 293 each coordinate UDP-N-acetyl-alpha-D-glucosamine. Asp153 contributes to the Mn(2+) binding site. The cysteines at positions 244 and 296 are disulfide-linked. Asp246 is a catalytic residue. Arg293 provides a ligand contact to UDP-N-acetyl-alpha-D-galactosamine.

Belongs to the glycosyltransferase 47 family. Requires Mn(2+) as cofactor.

It is found in the endoplasmic reticulum membrane. It catalyses the reaction 3-O-(beta-D-GlcA-(1-&gt;3)-beta-D-Gal-(1-&gt;3)-beta-D-Gal-(1-&gt;4)-beta-D-Xyl)-L-seryl-[protein] + UDP-N-acetyl-alpha-D-glucosamine = 3-O-(alpha-D-GlcNAc-(1-&gt;4)-beta-D-GlcA-(1-&gt;3)-beta-D-Gal-(1-&gt;3)-beta-D-Gal-(1-&gt;4)-beta-D-Xyl)-L-seryl-[protein] + UDP + H(+). In terms of biological role, glycosyltransferase required for the biosynthesis of heparan-sulfate and responsible for the alternating addition of beta-1-4-linked glucuronic acid (GlcA) and alpha-1-4-linked N-acetylglucosamine (GlcNAc) units to nascent heparan sulfate chains. The chain is Exostosin-like 2 (Extl2) from Mus musculus (Mouse).